A 681-amino-acid polypeptide reads, in one-letter code: Envelope glycoprotein (681 aa).

Positions 1 to 18 (MKTTCLFISLILIQGIKT) are cleaved as a signal peptide. The Extracellular portion of the chain corresponds to 19 to 648 (LPILEIASNN…GLGGKWWTSD (630 aa)). Residues 38 to 188 (SGTLQKTEDV…FSRQGQGYRH (151 aa)) form a receptor-binding region. 8 N-linked (GlcNAc...) asparagine; by host glycosylation sites follow: N94, N171, N190, N202, N207, N219, N223, and N255. The interval 223 to 351 (NQTCAPSKIP…STNNTSKNNF (129 aa)) is disordered. Over residues 244 to 259 (PTSTPTDATTLNTTDP) the composition is skewed to low complexity. The segment at 277 to 455 (EPYTTSDAVT…PFLDGLINAP (179 aa)) is mucin-like region. Polar residues-rich tracts occupy residues 278–290 (PYTTSDAVTKQGL) and 308–341 (EGNNTDHSQGTVTEPNKTNTTAQPSMPPHNTTAI). N-linked (GlcNAc...) asparagine; by host glycosylation is found at N310, N323, N326, N337, N344, N345, N350, N360, N389, N397, N408, and N487. A compositionally biased stretch (low complexity) spans 342–351 (STNNTSKNNF). A compositionally biased stretch (polar residues) spans 366–414 (TQSTATENEQTSAPSKTTLPPTGNLTTAKSTNNTKGPTTTAPNMTNGHL). The tract at residues 366–425 (TQSTATENEQTSAPSKTTLPPTGNLTTAKSTNNTKGPTTTAPNMTNGHLTSPSPTPNPTT) is disordered. Residues 529–549 (GLSWIPFFGPGIEGLYTAGLI) form a fusion peptide region. 2 N-linked (GlcNAc...) asparagine; by host glycosylation sites follow: N564 and N619. The helical transmembrane segment at 649-669 (WGVLTNLGILLLLSIAVLIAL) threads the bilayer. Residues 670-681 (SCICRIFTKYIG) lie on the Cytoplasmic side of the membrane. 2 S-palmitoyl cysteine; by host lipidation sites follow: C671 and C673.

Belongs to the filoviruses glycoprotein family. In terms of assembly, homotrimer; each monomer consists of a GP1 and a GP2 subunit linked by disulfide bonds. The resulting peplomers (GP1,2) protrude from the virus surface as spikes. GP1,2 interacts with human CD209 and CLEC4M (collectively referred to as DC-SIGN(R)). Asialoglycoprotein receptor (ASGP-R) may be a liver-specific receptor for GP1,2. Members of the Tyro3 receptor tyrosine kinase family may be cell entry factors interacting with GP1,2. N-glycosylated. In terms of processing, O-glycosylated in the mucin-like region. Post-translationally, specific enzymatic cleavages in vivo yield mature proteins. The precursor is processed into GP1 and GP2 by host cell furin in the trans Golgi, and maybe by other host proteases, to yield the mature GP1 and GP2 proteins. The cleavage site corresponds to the furin optimal cleavage sequence [KR]-X-[KR]-R. GP1 is phosphorylated on serine residues between residues 260 and 273.

It is found in the virion membrane. The protein resides in the host cell membrane. In terms of biological role, GP1 is responsible for binding to the receptor(s) on target cells. Interacts with CD209/DC-SIGN and CLEC4M/DC-SIGNR which act as cofactors for virus entry into the host cell. Binding to CD209 and CLEC4M, which are respectively found on dendritic cells (DCs), and on endothelial cells of liver sinusoids and lymph node sinuses, facilitate infection of macrophages and endothelial cells. These interactions not only facilitate virus cell entry, but also allow capture of viral particles by DCs and subsequent transmission to susceptible cells without DCs infection (trans infection). Its function is as follows. GP2 acts as a class I viral fusion protein. Under the current model, the protein has at least 3 conformational states: pre-fusion native state, pre-hairpin intermediate state, and post-fusion hairpin state. During viral and target cell membrane fusion, the coiled coil regions (heptad repeats) assume a trimer-of-hairpins structure, positioning the fusion peptide in close proximity to the C-terminal region of the ectodomain. The formation of this structure appears to drive apposition and subsequent fusion of viral and target cell membranes. Responsible for penetration of the virus into the cell cytoplasm by mediating the fusion of the membrane of the endocytosed virus particle with the endosomal membrane. Low pH in endosomes induces an irreversible conformational change in GP2, releasing the fusion hydrophobic peptide. The polypeptide is Envelope glycoprotein (GP) (Lake Victoria marburgvirus (strain Popp-67) (MARV)).